The primary structure comprises 560 residues: Arginine--tRNA ligase (560 aa).

The 'HIGH' region motif lies at 121-131; it reads PNIAKPFSMGH.

The protein belongs to the class-I aminoacyl-tRNA synthetase family. As to quaternary structure, monomer.

The protein localises to the cytoplasm. The enzyme catalyses tRNA(Arg) + L-arginine + ATP = L-arginyl-tRNA(Arg) + AMP + diphosphate. The protein is Arginine--tRNA ligase of Exiguobacterium sibiricum (strain DSM 17290 / CCUG 55495 / CIP 109462 / JCM 13490 / 255-15).